Consider the following 365-residue polypeptide: Neuronal migration protein doublecortin (365 aa).

A disordered region spans residues 11–31 (RDKTSRNMRGSRMNGLPSPTH). T14 bears the Phosphothreonine; by PKC mark. S28 bears the Phosphoserine; by CDK5 mark. S47 carries the phosphoserine; by MARK1 and PKA modification. 2 consecutive Doublecortin domains span residues 53 to 139 (KKVR…VEYT) and 180 to 263 (KLVT…AQDD). Residue Y70 is modified to Phosphotyrosine; by ABL. S74 bears the Phosphoserine; by PKC mark. The residue at position 90 (S90) is a Phosphoserine; by CK2. S110 carries the phosphoserine; by PKC modification. S115 is subject to Phosphoserine; by CK2, MARK1 and PKA. At S265 the chain carries Phosphoserine; by CK2. Positions 275–365 (KGNPSATAGP…DDSDSLGDSM (91 aa)) are disordered. Position 287 is a phosphoserine; by CDK5 (S287). Residue T289 is modified to Phosphothreonine; by CDK5. S294 is modified (phosphoserine; by PKC). S297 is modified (phosphoserine; by CDK5). Residue S306 is modified to Phosphoserine; by CK2. Phosphoserine; by DYRK2 is present on S306. Residues 307–341 (PADSGNDQDANGTSSSQLSTPKSKQSPISTPTSPG) are compositionally biased toward polar residues. Position 326 is a phosphothreonine; by CDK5 (T326). Position 326 is a phosphothreonine; by PKC and MAPK (T326). S332 carries the post-translational modification Phosphoserine; by CDK5. Residue S332 is modified to Phosphoserine; by MAPK. Residue T336 is modified to Phosphothreonine; by MAPK. S339 bears the Phosphoserine; by CDK5 mark. S339 bears the Phosphoserine; by MAPK mark. S342 carries the post-translational modification Phosphoserine; by PKC. Residues S354 and S360 each carry the phosphoserine; by CK2 modification. Residues 356–365 (DDSDSLGDSM) are compositionally biased toward acidic residues.

As to quaternary structure, interacts with tubulin. Interacts with USP9X. Phosphorylation by MARK1, MARK2 and PKA regulates its ability to bind microtubules. Phosphorylation at Ser-265 and Ser-297 seems to occur only in neonatal brain, the levels falling precipitously by postnatal day 21. In terms of processing, ubiquitinated by MDM2, leading to its degradation by the proteasome. Ubiquitinated by MDM2 and subsequent degradation leads to reduce the dendritic spine density of olfactory bulb granule cells. As to expression, highly expressed in neuronal cells of fetal brain (in the majority of cells of the cortical plate, intermediate zone and ventricular zone), but not expressed in other fetal tissues. In the adult, highly expressed in the brain frontal lobe, but very low expression in other regions of brain, and not detected in heart, placenta, lung, liver, skeletal muscles, kidney and pancreas.

It localises to the cytoplasm. Its subcellular location is the cell projection. It is found in the neuron projection. Microtubule-associated protein required for initial steps of neuronal dispersion and cortex lamination during cerebral cortex development. May act by competing with the putative neuronal protein kinase DCLK1 in binding to a target protein. May in that way participate in a signaling pathway that is crucial for neuronal interaction before and during migration, possibly as part of a calcium ion-dependent signal transduction pathway. May be part with PAFAH1B1/LIS-1 of overlapping, but distinct, signaling pathways that promote neuronal migration. The sequence is that of Neuronal migration protein doublecortin (DCX) from Homo sapiens (Human).